The sequence spans 743 residues: Polyribonucleotide nucleotidyltransferase (743 aa).

Mg(2+) contacts are provided by Asp489 and Asp495. Residues 556–618 enclose the KH domain; that stretch reads PRIEKMHIGK…PCIDAAIGMI (63 aa). The S1 motif domain occupies 628–698; it reads GETYPGKITS…KTGKFKLSRK (71 aa). The segment at 704–743 is disordered; it reads PEGYVEPQPRERRERREGGREGGRNFERRGGDRDHREPRG.

Belongs to the polyribonucleotide nucleotidyltransferase family. Mg(2+) serves as cofactor.

It is found in the cytoplasm. The enzyme catalyses RNA(n+1) + phosphate = RNA(n) + a ribonucleoside 5'-diphosphate. Its function is as follows. Involved in mRNA degradation. Catalyzes the phosphorolysis of single-stranded polyribonucleotides processively in the 3'- to 5'-direction. This is Polyribonucleotide nucleotidyltransferase from Porphyromonas gingivalis (strain ATCC BAA-308 / W83).